The sequence spans 355 residues: Syntaxin-5 (355 aa).

The Cytoplasmic portion of the chain corresponds to 1–333 (MIPRKRYGSK…KYFQSVTSNR (333 aa)). Over residues 28-37 (PATAGSSSSD) the composition is skewed to polar residues. Residues 28 to 47 (PATAGSSSSDIAPLPPPVAL) form a disordered region. The IxM motif; signal for cargo packaging into COPII-coated vesicles signature appears at 245 to 247 (IDM). The t-SNARE coiled-coil homology domain maps to 263–325 (DSYIQSRADT…EAAHSEILKY (63 aa)). The stretch at 287 to 318 (FQQLAHMVKEQEETIQRIDENVLGAQLDVEAA) forms a coiled coil. A helical; Anchor for type IV membrane protein membrane pass occupies residues 334–354 (WLMVKIFLILIVFFIIFVVFL). Residue Ala-355 is a topological domain, vesicular.

The protein belongs to the syntaxin family. Part of a ternary complex containing STX5A, NSFL1C and VCP. Part of a unique SNARE complex composed of the Golgi SNAREs GOSR1, GOSR2 and YKT6. This complex also includes VTI1A. Component of a SNARE complex consisting of STX5, YKT6, GOSR1 and BET1L. Interacts with BET1L. Interacts with BET1. Interacts with COG4. Interacts with GM130/GOLGA2. Interacts (via IxM motif) with SEC24C and SEC24D; mediates STX5 packaging into COPII-coated vesicles. Interacts with VLDLR; this interaction mediates VLDLR translocation from the endoplasmic reticulum to the plasma membrane.

Its subcellular location is the endoplasmic reticulum-Golgi intermediate compartment membrane. The protein resides in the golgi apparatus membrane. Mediates endoplasmic reticulum to Golgi transport. Together with p115/USO1 and GM130/GOLGA2, involved in vesicle tethering and fusion at the cis-Golgi membrane to maintain the stacked and inter-connected structure of the Golgi apparatus. This is Syntaxin-5 (STX5) from Bos taurus (Bovine).